A 101-amino-acid chain; its full sequence is Signal recognition particle 19 kDa protein (101 aa).

It belongs to the SRP19 family. As to quaternary structure, part of the signal recognition particle protein translocation system, which is composed of SRP and FtsY. Archaeal SRP consists of a 7S RNA molecule of 300 nucleotides and two protein subunits: SRP54 and SRP19.

It localises to the cytoplasm. Functionally, involved in targeting and insertion of nascent membrane proteins into the cytoplasmic membrane. Binds directly to 7S RNA and mediates binding of the 54 kDa subunit of the SRP. In Methanosarcina barkeri (strain Fusaro / DSM 804), this protein is Signal recognition particle 19 kDa protein.